The chain runs to 232 residues: 5'-methylthioadenosine/S-adenosylhomocysteine nucleosidase (232 aa).

Glu12 serves as the catalytic Proton acceptor. Residues Gly78, Ile152, and 173–174 each bind substrate; that span reads ME. Asp197 functions as the Proton donor in the catalytic mechanism.

This sequence belongs to the PNP/UDP phosphorylase family. MtnN subfamily. Homodimer.

It catalyses the reaction S-adenosyl-L-homocysteine + H2O = S-(5-deoxy-D-ribos-5-yl)-L-homocysteine + adenine. It carries out the reaction S-methyl-5'-thioadenosine + H2O = 5-(methylsulfanyl)-D-ribose + adenine. The catalysed reaction is 5'-deoxyadenosine + H2O = 5-deoxy-D-ribose + adenine. Its pathway is amino-acid biosynthesis; L-methionine biosynthesis via salvage pathway; S-methyl-5-thio-alpha-D-ribose 1-phosphate from S-methyl-5'-thioadenosine (hydrolase route): step 1/2. Catalyzes the irreversible cleavage of the glycosidic bond in both 5'-methylthioadenosine (MTA) and S-adenosylhomocysteine (SAH/AdoHcy) to adenine and the corresponding thioribose, 5'-methylthioribose and S-ribosylhomocysteine, respectively. Also cleaves 5'-deoxyadenosine, a toxic by-product of radical S-adenosylmethionine (SAM) enzymes, into 5-deoxyribose and adenine. Thus, is required for in vivo function of the radical SAM enzymes biotin synthase and lipoic acid synthase, that are inhibited by 5'-deoxyadenosine accumulation. This chain is 5'-methylthioadenosine/S-adenosylhomocysteine nucleosidase, found in Klebsiella pneumoniae (strain 342).